The chain runs to 342 residues: Nucleoid-associated protein Spea_1765 (342 aa).

The protein belongs to the YejK family.

Its subcellular location is the cytoplasm. It localises to the nucleoid. This chain is Nucleoid-associated protein Spea_1765, found in Shewanella pealeana (strain ATCC 700345 / ANG-SQ1).